The following is a 387-amino-acid chain: Flap endonuclease 1 (387 aa).

The tract at residues 1–104 is N-domain; that stretch reads MGILGLSKLI…GELAKRAERR (104 aa). Aspartate 34 serves as a coordination point for Mg(2+). DNA contacts are provided by arginine 47 and arginine 70. 5 residues coordinate Mg(2+): aspartate 86, glutamate 158, glutamate 160, aspartate 179, and aspartate 181. The interval 122-253 is I-domain; that stretch reads GIEKFNRRLV…KRAIELINNY (132 aa). Glutamate 158 serves as a coordination point for DNA. The DNA site is built by glycine 231 and aspartate 233. Aspartate 233 contacts Mg(2+). Residues 336 to 344 form an interaction with PCNA region; that stretch reads TQVRLDSFF. A disordered region spans residues 346-387; the sequence is TLPSTPNATNAAKRKAEEAKKSANNKKAKTSGGVGGRGRRPK.

The protein belongs to the XPG/RAD2 endonuclease family. FEN1 subfamily. Interacts with PCNA. Three molecules of FEN1 bind to one PCNA trimer with each molecule binding to one PCNA monomer. PCNA stimulates the nuclease activity without altering cleavage specificity. The cofactor is Mg(2+). Phosphorylated. Phosphorylation upon DNA damage induces relocalization to the nuclear plasma.

It localises to the nucleus. The protein localises to the nucleolus. It is found in the nucleoplasm. The protein resides in the mitochondrion. Functionally, structure-specific nuclease with 5'-flap endonuclease and 5'-3' exonuclease activities involved in DNA replication and repair. During DNA replication, cleaves the 5'-overhanging flap structure that is generated by displacement synthesis when DNA polymerase encounters the 5'-end of a downstream Okazaki fragment. It enters the flap from the 5'-end and then tracks to cleave the flap base, leaving a nick for ligation. Also involved in the long patch base excision repair (LP-BER) pathway, by cleaving within the apurinic/apyrimidinic (AP) site-terminated flap. Acts as a genome stabilization factor that prevents flaps from equilibrating into structures that lead to duplications and deletions. Also possesses 5'-3' exonuclease activity on nicked or gapped double-stranded DNA, and exhibits RNase H activity. Also involved in replication and repair of rDNA and in repairing mitochondrial DNA. This is Flap endonuclease 1 from Drosophila erecta (Fruit fly).